The chain runs to 434 residues: 3-phosphoshikimate 1-carboxyvinyltransferase (434 aa).

Positions 22, 23, and 27 each coordinate 3-phosphoshikimate. K22 contacts phosphoenolpyruvate. Phosphoenolpyruvate-binding residues include G93 and R121. 6 residues coordinate 3-phosphoshikimate: S168, S169, Q170, S199, D320, and K347. A phosphoenolpyruvate-binding site is contributed by Q170. D320 acts as the Proton acceptor in catalysis. Phosphoenolpyruvate contacts are provided by R351, R394, and K419.

Belongs to the EPSP synthase family. As to quaternary structure, monomer.

The protein resides in the cytoplasm. It carries out the reaction 3-phosphoshikimate + phosphoenolpyruvate = 5-O-(1-carboxyvinyl)-3-phosphoshikimate + phosphate. It participates in metabolic intermediate biosynthesis; chorismate biosynthesis; chorismate from D-erythrose 4-phosphate and phosphoenolpyruvate: step 6/7. Functionally, catalyzes the transfer of the enolpyruvyl moiety of phosphoenolpyruvate (PEP) to the 5-hydroxyl of shikimate-3-phosphate (S3P) to produce enolpyruvyl shikimate-3-phosphate and inorganic phosphate. The sequence is that of 3-phosphoshikimate 1-carboxyvinyltransferase from Burkholderia orbicola (strain MC0-3).